A 663-amino-acid chain; its full sequence is UvrABC system protein B (663 aa).

Over residues 1–10 the composition is skewed to basic and acidic residues; it reads MIDKRDDKPF. A disordered region spans residues 1–23; it reads MIDKRDDKPFKLKSKYKPSGDQP. Positions 31–418 constitute a Helicase ATP-binding domain; that stretch reads DNIEGGEKAQ…TNTIIEQIIR (388 aa). Residue 44 to 51 participates in ATP binding; it reads GATGTGKT. A Beta-hairpin motif is present at residues 97–120; sequence YYDYYQPEAYVPSSDTYIEKDSSV. The Helicase C-terminal domain maps to 435 to 601; sequence QMDDLLGEIN…TIKKDIRGLI (167 aa). A UVR domain is found at 627–662; it reads KEAINALQKQMQEAAELLDFELAAQMRDLILELKLM.

It belongs to the UvrB family. As to quaternary structure, forms a heterotetramer with UvrA during the search for lesions. Interacts with UvrC in an incision complex.

It localises to the cytoplasm. Functionally, the UvrABC repair system catalyzes the recognition and processing of DNA lesions. A damage recognition complex composed of 2 UvrA and 2 UvrB subunits scans DNA for abnormalities. Upon binding of the UvrA(2)B(2) complex to a putative damaged site, the DNA wraps around one UvrB monomer. DNA wrap is dependent on ATP binding by UvrB and probably causes local melting of the DNA helix, facilitating insertion of UvrB beta-hairpin between the DNA strands. Then UvrB probes one DNA strand for the presence of a lesion. If a lesion is found the UvrA subunits dissociate and the UvrB-DNA preincision complex is formed. This complex is subsequently bound by UvrC and the second UvrB is released. If no lesion is found, the DNA wraps around the other UvrB subunit that will check the other stand for damage. This Streptococcus pyogenes serotype M3 (strain ATCC BAA-595 / MGAS315) protein is UvrABC system protein B.